The sequence spans 702 residues: Choline transporter-like protein 5-A (702 aa).

Residues 21 to 41 (VLCCVLFVIVILGYIALGTVA) form a helical membrane-spanning segment. At 42–225 (WIHGDPRKVI…KIVEDYASCW (184 aa)) the chain is on the extracellular side. Asn120, Asn173, and Asn180 each carry an N-linked (GlcNAc...) asparagine glycan. A helical membrane pass occupies residues 226–246 (YWIVIGLFIALVISLIFILLL). At 247–249 (RFT) the chain is on the cytoplasmic side. The chain crosses the membrane as a helical span at residues 250 to 270 (AGFLLWFIIFAVILLVAYGIW). At 271–308 (HCYWEFAVLRETPGADVTISDIGFQTDLHVYLQLSQTW) the chain is on the extracellular side. A helical membrane pass occupies residues 309–329 (LVFMVTLGLTEASIVLMLIFL). At 330-334 (RKRVR) the chain is on the cytoplasmic side. Residues 335 to 355 (IAIALLREGSRAISYIMSALF) form a helical membrane-spanning segment. Residues 356–357 (YP) lie on the Extracellular side of the membrane. A helical membrane pass occupies residues 358 to 378 (IITFVLLAICISYWAMTALFL). The Cytoplasmic portion of the chain corresponds to 379–443 (ASSGDAVYKV…RYIFILQLCN (65 aa)). A helical membrane pass occupies residues 444–464 (LLVFLWLVNFTIALGQCTVAG). Topologically, residues 465–498 (AFASYYWARRKPADIPPCPVFSSFSRALRYHTGS) are extracellular. Residues 499–519 (LAFGSLILAVVQLIRVILEYL) traverse the membrane as a helical segment. Residues 520–593 (DHKLKGAHNA…RVAVLDKVTD (74 aa)) are Cytoplasmic-facing. Residues 594–614 (FLLFLGKLLIAGSVGVIAFFL) traverse the membrane as a helical segment. Residues 615 to 632 (FTRKIPIIQEEVPVLNYY) lie on the Extracellular side of the membrane. Residues 633–653 (CVPLLTVILGSYLIAHSFFSV) form a helical membrane-spanning segment. The Cytoplasmic portion of the chain corresponds to 654-699 (YAMCVDTLFLCFCEDLERNDGTTAKPFFMSPGLKRILGKAEQSPKK).

Belongs to the CTL (choline transporter-like) family.

It is found in the cell membrane. It carries out the reaction choline(out) + n H(+)(in) = choline(in) + n H(+)(out). Its function is as follows. Choline/H+ antiporter. This chain is Choline transporter-like protein 5-A (slc44a5a), found in Danio rerio (Zebrafish).